Consider the following 1201-residue polypeptide: MPRGEAPGPGRRGAKDEALGEESGERWSPEFHLQRKLADSSHSEQQDRNRVSEELIMVVQEMKKYFPSERRNKPSTLDALNYALRCVHSVQANSEFFQILSQNGAPQADVSMYSLEELATIASEHTSKNTDTFVAVFSFLSGRLVHISEQAALILNRKKDVLASSHFVDLLAPQDMRVFYAHTARAQLPFWNNWTQRAARYECAPVKPFFCRIRGGEDRKQEKCHSPFRIIPYLIHVHHPAQPELESEPCCLTVVEKIHSGYEAPRIPVNKRIFTTTHTPGCVFLEVDEKAVPLLGYLPQDLIGTSILSYLHPEDRSLMVAIHQKVLKYAGHPPFEHSPIRFCTQNGDYIILDSSWSSFVNPWSRKISFIIGRHKVRTSPLNEDVFATKIKKMNDNDKDITELQEQIYKLLLQPVHVSVSSGYGSLGSSGSQEQLVSIASSSEASGHRVEETKAEQMTLQQVYASVNKIKNLGQQLYIESMTKSSFKPVTGTRTEPNGGGECKTFTSFHQTLKNNSVYTEPCEDLRNDEHSPSYQQINCIDSVIRYLKSYNIPALKRKCISCTNTTSSSSEEDKQNHKADDVQALQAGLQIPAIPKSEMPTNGRSIDTGGGAPQILSTAMLSLGSGISQCGYSSTIVHVPPPETARDATLFCEPWTLNMQPAPLTSEEFKHVGLTAAVLSAHTQKEEQNYVDKFREKILSSPYSSYLQQESRSKAKYSYFQGDSTSKQTRSAGCRKGKHKRKKLPEPPDSSSSNTGSGPRRGAHQNAQPCCPSAASSPHTSSPTFPPAAMVPSQAPYLVPAFPLPAATSPGREYAAPGTAPEGLHGLPLSEGLQPYPAFPFPYLDTFMTVFLPDPPVCPLLSPSFLPCPFLGATASSAISPSMSSAMSPTLDPPPSVTSQRREEEKWEAQSEGHPFITSRSSSPLQLNLLQEEMPRPSESPDQMRRNTCPQTEYCVTGNNGSESSPATTGALSTGSPPRENPSHPTASALSTGSPPMKNPSHPTASALSTGSPPMKNPSHPTASTLSMGLPPSRTPSHPTATVLSTGSPPSESPSRTGSAASGSSDSSIYLTSSVYSSKISQNGQQSQDVQKKETFPNVAEEPIWRMIRQTPERILMTYQVPERVKEVVLKEDLEKLESMRQQQPQFSHGQKEELAKVYNWIQSQTVTQEIDIQACVTCENEDSADGAATSCGQVLVEDSC.

The disordered stretch occupies residues 1-50; sequence MPRGEAPGPGRRGAKDEALGEESGERWSPEFHLQRKLADSSHSEQQDRNR. Over residues 13 to 50 the composition is skewed to basic and acidic residues; it reads GAKDEALGEESGERWSPEFHLQRKLADSSHSEQQDRNR. Positions 55 to 64 match the Nuclear export signal 1 motif; sequence LIMVVQEMKK. PAS domains follow at residues 121 to 188 and 262 to 328; these read IASE…RAQL and YEAP…KVLK. A PAC domain is found at 337 to 380; sequence HSPIRFCTQNGDYIILDSSWSSFVNPWSRKISFIIGRHKVRTSP. The Nuclear export signal 3 signature appears at 403–412; it reads LQEQIYKLLL. Residues 555 to 760 are CSNK1E binding domain; that stretch reads LKRKCISCTN…SSSNTGSGPR (206 aa). Disordered stretches follow at residues 717–788 and 881–923; these read YSYF…FPPA and PSMS…RSSS. Positions 721 to 731 are enriched in polar residues; that stretch reads QGDSTSKQTRS. The short motif at 729–745 is the Nuclear localization signal element; the sequence is TRSAGCRKGKHKRKKLP. Positions 733 to 743 are enriched in basic residues; that stretch reads GCRKGKHKRKK. Composition is skewed to low complexity over residues 767–783 and 881–890; these read AQPC…TSSP and PSMSSAMSPT. Residues 900–911 are compositionally biased toward basic and acidic residues; sequence QRREEEKWEAQS. Serine 919 is subject to Phosphoserine. The Nuclear export signal 2 signature appears at 925–932; sequence LQLNLLQE. The disordered stretch occupies residues 952–1067; that stretch reads TEYCVTGNNG…GSAASGSSDS (116 aa). Polar residues-rich tracts occupy residues 957–976, 983–994, 1001–1012, and 1035–1050; these read TGNN…STGS, SHPTASALSTGS, and TPSH…GSPP. 5 tandem repeats follow at residues 965-982, 983-1000, 1001-1018, 1019-1036, and 1037-1054. Positions 965 to 1054 are 5 X 18 AA tandem repeats of S-[HP]-[AP]-T-[AT]-[GST]-[ATV]-L-S-[MT]-G-[LS]-P-P-[MRS]-[EKR]-[NST]-P; sequence SPATTGALST…STGSPPSESP (90 aa). Residue serine 994 is modified to Phosphoserine. At serine 1053 the chain carries Phosphoserine. Residues 1053–1067 show a composition bias toward low complexity; sequence SPSRTGSAASGSSDS. Residues 1123 to 1201 form a CRY binding domain region; that stretch reads ERVKEVVLKE…CGQVLVEDSC (79 aa).

As to quaternary structure, homodimer. Component of the circadian core oscillator, which includes the CRY proteins, CLOCK or NPAS2, BMAL1 or BMAL2, CSNK1D and/or CSNK1E, TIMELESS and the PER proteins. Interacts directly with PER1, PER2, CRY1, CRY2, and TIMELESS; interaction with CRY1 and CRY2 is weak and not rhythmic. Interacts with FBXW11 and BTRC. Post-translationally, phosphorylation by CSNK1E is weak and appears to require association with PER1 and translocation to the nucleus. In terms of processing, ubiquitinated.

The protein resides in the cytoplasm. Its subcellular location is the nucleus. In terms of biological role, originally described as a core component of the circadian clock. The circadian clock, an internal time-keeping system, regulates various physiological processes through the generation of approximately 24 hour circadian rhythms in gene expression, which are translated into rhythms in metabolism and behavior. It is derived from the Latin roots 'circa' (about) and 'diem' (day) and acts as an important regulator of a wide array of physiological functions including metabolism, sleep, body temperature, blood pressure, endocrine, immune, cardiovascular, and renal function. Consists of two major components: the central clock, residing in the suprachiasmatic nucleus (SCN) of the brain, and the peripheral clocks that are present in nearly every tissue and organ system. Both the central and peripheral clocks can be reset by environmental cues, also known as Zeitgebers (German for 'timegivers'). The predominant Zeitgeber for the central clock is light, which is sensed by retina and signals directly to the SCN. The central clock entrains the peripheral clocks through neuronal and hormonal signals, body temperature and feeding-related cues, aligning all clocks with the external light/dark cycle. Circadian rhythms allow an organism to achieve temporal homeostasis with its environment at the molecular level by regulating gene expression to create a peak of protein expression once every 24 hours to control when a particular physiological process is most active with respect to the solar day. Transcription and translation of core clock components (CLOCK, NPAS2, BMAL1, BMAL2, PER1, PER2, PER3, CRY1 and CRY2) plays a critical role in rhythm generation, whereas delays imposed by post-translational modifications (PTMs) are important for determining the period (tau) of the rhythms (tau refers to the period of a rhythm and is the length, in time, of one complete cycle). A diurnal rhythm is synchronized with the day/night cycle, while the ultradian and infradian rhythms have a period shorter and longer than 24 hours, respectively. Disruptions in the circadian rhythms contribute to the pathology of cardiovascular diseases, cancer, metabolic syndromes and aging. A transcription/translation feedback loop (TTFL) forms the core of the molecular circadian clock mechanism. Transcription factors, CLOCK or NPAS2 and BMAL1 or BMAL2, form the positive limb of the feedback loop, act in the form of a heterodimer and activate the transcription of core clock genes and clock-controlled genes (involved in key metabolic processes), harboring E-box elements (5'-CACGTG-3') within their promoters. The core clock genes: PER1/2/3 and CRY1/2 which are transcriptional repressors form the negative limb of the feedback loop and interact with the CLOCK|NPAS2-BMAL1|BMAL2 heterodimer inhibiting its activity and thereby negatively regulating their own expression. This heterodimer also activates nuclear receptors NR1D1, NR1D2, RORA, RORB and RORG, which form a second feedback loop and which activate and repress BMAL1 transcription, respectively. Has a redundant role with the other PER proteins PER1 and PER2 and is not essential for the circadian rhythms maintenance. In contrast, plays an important role in sleep-wake timing and sleep homeostasis probably through the transcriptional regulation of sleep homeostasis-related genes, without influencing circadian parameters. Can bind heme. This Homo sapiens (Human) protein is Period circadian protein homolog 3 (PER3).